The chain runs to 287 residues: MKLRIKAYAKVNLTLDVLSKREDGYHEILSVMQSIDLADVIEFEKAKEILFECDHERVPKGEENLIMKAFNAIRDRYFLNEGIKIKLFKNIPLAAGLAGGSADAAATIVALDKLWNLNLTEKEMEEIASEVGSDVPFCLKGGTKLASGRGEKLQDLEGIPLNLLLVKPDLEISTKEVYTEWDNSGFKSLNSTFLFVEALKKGDLLEIARNISNDLERVTSQKYRVIEDIKKSLIEKGALSASMTGSGPTVYGVFNDVEKLVRAYHDLKGVYPFVAISKTIDKGLEIL.

Residue Lys10 is part of the active site. 92–102 (PLAAGLAGGSA) is a binding site for ATP. Residue Asp134 is part of the active site.

The protein belongs to the GHMP kinase family. IspE subfamily.

The enzyme catalyses 4-CDP-2-C-methyl-D-erythritol + ATP = 4-CDP-2-C-methyl-D-erythritol 2-phosphate + ADP + H(+). Its pathway is isoprenoid biosynthesis; isopentenyl diphosphate biosynthesis via DXP pathway; isopentenyl diphosphate from 1-deoxy-D-xylulose 5-phosphate: step 3/6. Catalyzes the phosphorylation of the position 2 hydroxy group of 4-diphosphocytidyl-2C-methyl-D-erythritol. The chain is 4-diphosphocytidyl-2-C-methyl-D-erythritol kinase from Caldanaerobacter subterraneus subsp. tengcongensis (strain DSM 15242 / JCM 11007 / NBRC 100824 / MB4) (Thermoanaerobacter tengcongensis).